Reading from the N-terminus, the 753-residue chain is Polyribonucleotide nucleotidyltransferase (753 aa).

Positions 523 and 529 each coordinate Mg(2+). A KH domain is found at 589–648 (PRIISVRIPVDKIGAVIGPKGAMINQIQDDTGADITIEDDGTVLIGATDGASAEAARSAV). Residues 660–732 (GERYLGTVVK…DRGKLSLSPV (73 aa)) form the S1 motif domain. Positions 733–753 (GAESDAVAETADAIESSQTEA) are disordered.

This sequence belongs to the polyribonucleotide nucleotidyltransferase family. Mg(2+) serves as cofactor.

It is found in the cytoplasm. It catalyses the reaction RNA(n+1) + phosphate = RNA(n) + a ribonucleoside 5'-diphosphate. In terms of biological role, involved in mRNA degradation. Catalyzes the phosphorolysis of single-stranded polyribonucleotides processively in the 3'- to 5'-direction. The polypeptide is Polyribonucleotide nucleotidyltransferase (Micrococcus luteus (strain ATCC 4698 / DSM 20030 / JCM 1464 / CCM 169 / CCUG 5858 / IAM 1056 / NBRC 3333 / NCIMB 9278 / NCTC 2665 / VKM Ac-2230) (Micrococcus lysodeikticus)).